The chain runs to 179 residues: Probable chorismate pyruvate-lyase (179 aa).

3 residues coordinate substrate: arginine 82, leucine 120, and glutamate 165.

Belongs to the UbiC family.

The protein resides in the cytoplasm. The enzyme catalyses chorismate = 4-hydroxybenzoate + pyruvate. It functions in the pathway cofactor biosynthesis; ubiquinone biosynthesis. Functionally, removes the pyruvyl group from chorismate, with concomitant aromatization of the ring, to provide 4-hydroxybenzoate (4HB) for the ubiquinone pathway. This chain is Probable chorismate pyruvate-lyase, found in Vibrio vulnificus (strain YJ016).